Here is a 283-residue protein sequence, read N- to C-terminus: Formamidopyrimidine-DNA glycosylase (283 aa).

Pro2 acts as the Schiff-base intermediate with DNA in catalysis. The active-site Proton donor is Glu3. Lys60 functions as the Proton donor; for beta-elimination activity in the catalytic mechanism. 3 residues coordinate DNA: His95, Arg114, and Arg159. The segment at 244-278 (WVYGRHNQPCRVCGTPIERIKLGGRSSHFCPQCQP) adopts an FPG-type zinc-finger fold. The active-site Proton donor; for delta-elimination activity is Arg268.

It belongs to the FPG family. As to quaternary structure, monomer. Zn(2+) is required as a cofactor.

The enzyme catalyses Hydrolysis of DNA containing ring-opened 7-methylguanine residues, releasing 2,6-diamino-4-hydroxy-5-(N-methyl)formamidopyrimidine.. The catalysed reaction is 2'-deoxyribonucleotide-(2'-deoxyribose 5'-phosphate)-2'-deoxyribonucleotide-DNA = a 3'-end 2'-deoxyribonucleotide-(2,3-dehydro-2,3-deoxyribose 5'-phosphate)-DNA + a 5'-end 5'-phospho-2'-deoxyribonucleoside-DNA + H(+). In terms of biological role, involved in base excision repair of DNA damaged by oxidation or by mutagenic agents. Acts as a DNA glycosylase that recognizes and removes damaged bases. Has a preference for oxidized purines, such as 7,8-dihydro-8-oxoguanine (8-oxoG). Has AP (apurinic/apyrimidinic) lyase activity and introduces nicks in the DNA strand. Cleaves the DNA backbone by beta-delta elimination to generate a single-strand break at the site of the removed base with both 3'- and 5'-phosphates. The polypeptide is Formamidopyrimidine-DNA glycosylase (Crocosphaera subtropica (strain ATCC 51142 / BH68) (Cyanothece sp. (strain ATCC 51142))).